A 998-amino-acid chain; its full sequence is UPF0182 protein AAur_2732 (998 aa).

A run of 7 helical transmembrane segments spans residues 18–38 (GALT…IFFA), 64–84 (IITF…AIRI), 115–135 (VVMI…AASQ), 168–188 (FLGF…IAGI), 211–231 (QIHI…NFWL), 260–280 (AILA…AIIG), and 287–307 (IGTA…PWVI). Disordered stretches follow at residues 490-518 (GAPD…TFSG), 888-923 (LFGG…PTDA), and 971-998 (QARL…SPSS). A compositionally biased stretch (basic and acidic residues) spans 496–509 (PNREQDRPAGREGG). The span at 908 to 919 (TSPPGTTPPPAG) shows a compositional bias: pro residues. The segment covering 976-990 (ATPAPTATPGATPSA) has biased composition (low complexity).

It belongs to the UPF0182 family.

Its subcellular location is the cell membrane. In Paenarthrobacter aurescens (strain TC1), this protein is UPF0182 protein AAur_2732.